The sequence spans 37 residues: Large ribosomal subunit protein bL36 (37 aa).

Belongs to the bacterial ribosomal protein bL36 family.

The sequence is that of Large ribosomal subunit protein bL36 from Chromobacterium violaceum (strain ATCC 12472 / DSM 30191 / JCM 1249 / CCUG 213 / NBRC 12614 / NCIMB 9131 / NCTC 9757 / MK).